Reading from the N-terminus, the 223-residue chain is MTEAVAAEATETAPATDDRRGGRRGERGDRGQGRGDRGGRGGRDGGREAEKSQFVERVVTINRVAKVVKGGRRFSFTALVVVGDGNGMVGVGYGKAKEVPAAIAKGVEEAKKSFFRVPRVGSTIPHRVQGEAAAGVVLLRPASAGTGVIAGGPVRAVLECVGIHDILSKSLGSSNAINIVHATVAALKQLEEPASVAARRGLPLDEVAPAALVRALQNQKAGV.

Positions methionine 1–alanine 15 are enriched in low complexity. The interval methionine 1–lysine 51 is disordered. Over residues threonine 16–lysine 51 the composition is skewed to basic and acidic residues. The S5 DRBM domain maps to phenylalanine 54–valine 117.

This sequence belongs to the universal ribosomal protein uS5 family. Part of the 30S ribosomal subunit. Contacts proteins S4 and S8.

Its function is as follows. With S4 and S12 plays an important role in translational accuracy. In terms of biological role, located at the back of the 30S subunit body where it stabilizes the conformation of the head with respect to the body. The sequence is that of Small ribosomal subunit protein uS5 from Paenarthrobacter aurescens (strain TC1).